The sequence spans 224 residues: Urease accessory protein UreF (224 aa).

Belongs to the UreF family. In terms of assembly, ureD, UreF and UreG form a complex that acts as a GTP-hydrolysis-dependent molecular chaperone, activating the urease apoprotein by helping to assemble the nickel containing metallocenter of UreC. The UreE protein probably delivers the nickel.

It localises to the cytoplasm. In terms of biological role, required for maturation of urease via the functional incorporation of the urease nickel metallocenter. This is Urease accessory protein UreF from Azotobacter vinelandii (strain DJ / ATCC BAA-1303).